The primary structure comprises 168 residues: Pleiotrophin (168 aa).

A signal peptide spans 1–32 (MQTPQYLQQRRKFAAAFLAFIFILAAVDTAEA). 5 cysteine pairs are disulfide-bonded: Cys-47–Cys-76, Cys-55–Cys-85, Cys-62–Cys-89, Cys-99–Cys-131, and Cys-109–Cys-141. Chondroitin sulfate binding regions lie at residues 92 to 99 (KKQFGAEC) and 123 to 131 (KRALHNADC). The disordered stretch occupies residues 141–168 (CGKLTKSKPQAESKKKKKEGKKQEKMLD). The chondroitin sulfate A binding stretch occupies residues 147-168 (SKPQAESKKKKKEGKKQEKMLD).

Interacts with ALK and NEK6. Interacts with PTPRZ1 (via chondroitin sulfate groups); promotes formation of homooligomers; oligomerization impairs tyrosine phosphatase activity. Forms a complex with PTPRZ1 and CTNNB1; this complex inactivates PTPRZ1 protein tyrosine phosphatase activity through PTN interaction and stimulates tyrosine phosphorylation of CTNNB1. Interacts with ITGB3 and ITGA5. Forms a complex with PTPRZ1 and integrin alpha-V/beta-3 (ITGAV:ITGB3) that stimulates endothelial cell migration through ITGB3 'Tyr-773' phosphorylation. Interacts with SDC3 (via heparan sulfate chains); this interaction mediates the neurite outgrowth-promoting signal from PTN to the cytoskeleton of growing neurites; this interaction mediates osteoblast recruitment. Interacts with GPC2 (via heparan sulfate); this interaction promotes neurite outgrowth through binding of PTN with chondroitin sulfate of proteoglycans, thereby releasing PTPRS of chondroitin sulfate proteoglycans (CSPGs) and leading to binding with heparan sulfate of GPC2. Post-translationally, phosphorylated by NEK6.

It is found in the secreted. Secreted growth factor that mediates its signal through cell-surface proteoglycan and non-proteoglycan receptors. Binds cell-surface proteoglycan receptor via their chondroitin sulfate (CS) groups. Thereby regulates many processes like cell proliferation, cell survival, cell growth, cell differentiation and cell migration in several tissues namely neuron and bone. Also plays a role in synaptic plasticity and learning-related behavior by inhibiting long-term synaptic potentiation. Binds PTPRZ1, leading to neutralization of the negative charges of the CS chains of PTPRZ1, inducing PTPRZ1 clustering, thereby causing the dimerization and inactivation of its phosphatase activity leading to increased tyrosine phosphorylation of each of the PTPRZ1 substrates like ALK, CTNNB1 or AFAP1L2 in order to activate the PI3K-AKT pathway. Through PTPRZ1 binding controls oligodendrocyte precursor cell differentiation by enhancing the phosphorylation of AFAP1L2 in order to activate the PI3K-AKT pathway. Forms a complex with PTPRZ1 and integrin alpha-V/beta-3 (ITGAV:ITGB3) that stimulates endothelial cell migration through SRC dephosphorylation and activation that consequently leads to ITGB3 'Tyr-773' phosphorylation. In adult hippocampus promotes dendritic arborization, spine development, and functional integration and connectivity of newborn granule neurons through ALK by activating AKT signaling pathway. Binds GPC2 and chondroitin sulfate proteoglycans (CSPGs) at the neuron surface, leading to abrogation of binding between PTPRS and CSPGs and neurite outgrowth promotion. Binds SDC3 and mediates bone formation by recruiting and attaching osteoblasts/osteoblast precursors to the sites for new bone deposition. Binds ALK and promotes cell survival and cell proliferation through MAPK pathway activation. Inhibits proliferation and enhances differentiation of neural stem cells by inhibiting FGF2-induced fibroblast growth factor receptor signaling pathway. Mediates regulatory mechanisms in normal hemostasis and in hematopoietic regeneration and in maintaining the balance of myeloid and lymphoid regeneration. In addition may play a role in the female reproductive system, auditory response and the progesterone-induced decidualization pathway. The chain is Pleiotrophin from Bos taurus (Bovine).